We begin with the raw amino-acid sequence, 721 residues long: Ribosomal RNA large subunit methyltransferase K/L (721 aa).

Residues 56–167 (GMYKACLWSR…REVVTVSIDL (112 aa)) form the THUMP domain.

The protein belongs to the methyltransferase superfamily. RlmKL family.

Its subcellular location is the cytoplasm. The enzyme catalyses guanosine(2445) in 23S rRNA + S-adenosyl-L-methionine = N(2)-methylguanosine(2445) in 23S rRNA + S-adenosyl-L-homocysteine + H(+). It carries out the reaction guanosine(2069) in 23S rRNA + S-adenosyl-L-methionine = N(2)-methylguanosine(2069) in 23S rRNA + S-adenosyl-L-homocysteine + H(+). In terms of biological role, specifically methylates the guanine in position 2445 (m2G2445) and the guanine in position 2069 (m7G2069) of 23S rRNA. The polypeptide is Ribosomal RNA large subunit methyltransferase K/L (Marinomonas sp. (strain MWYL1)).